Reading from the N-terminus, the 122-residue chain is Large ribosomal subunit protein uL14c (122 aa).

It belongs to the universal ribosomal protein uL14 family. Part of the 50S ribosomal subunit.

It localises to the plastid. The protein localises to the chloroplast. In terms of biological role, binds to 23S rRNA. The protein is Large ribosomal subunit protein uL14c of Chloranthus spicatus (Chulantree).